The following is a 269-amino-acid chain: Tryptophan synthase alpha chain (269 aa).

Catalysis depends on proton acceptor residues glutamate 49 and aspartate 60.

Belongs to the TrpA family. Tetramer of two alpha and two beta chains.

The enzyme catalyses (1S,2R)-1-C-(indol-3-yl)glycerol 3-phosphate + L-serine = D-glyceraldehyde 3-phosphate + L-tryptophan + H2O. It functions in the pathway amino-acid biosynthesis; L-tryptophan biosynthesis; L-tryptophan from chorismate: step 5/5. The alpha subunit is responsible for the aldol cleavage of indoleglycerol phosphate to indole and glyceraldehyde 3-phosphate. This Buchnera aphidicola subsp. Schlechtendalia chinensis protein is Tryptophan synthase alpha chain.